Here is a 211-residue protein sequence, read N- to C-terminus: Ceramide-1-phosphate transfer protein (211 aa).

Residues Asp-53, Lys-57, Arg-103, Arg-107, and His-147 each coordinate an N-acylsphingoid base 1-phosphate.

This sequence belongs to the GLTP family.

Its subcellular location is the cytoplasm. The protein resides in the cytosol. The protein localises to the golgi apparatus. It is found in the trans-Golgi network membrane. It localises to the cell membrane. Its subcellular location is the endosome membrane. The protein resides in the nucleus outer membrane. The catalysed reaction is N-(hexadecanoyl)-sphing-4-enine-1-phosphate(in) = N-(hexadecanoyl)-sphing-4-enine-1-phosphate(out). The enzyme catalyses N-(9Z-octadecenoyl)-sphing-4-enine-1-phosphate(in) = N-(9Z-octadecenoyl)-sphing-4-enine-1-phosphate(out). Its function is as follows. Mediates the intracellular transfer of ceramide-1-phosphate (C1P) between organelle membranes and the cell membrane. Required for normal structure of the Golgi stacks. Can bind phosphoceramides with a variety of aliphatic chains, but has a preference for lipids with saturated C16:0 or monounsaturated C18:1 aliphatic chains, and is inefficient with phosphoceramides containing lignoceryl (C24:0). Plays a role in the regulation of the cellular levels of ceramide-1-phosphate, and thereby contributes to the regulation of phospholipase PLA2G4A activity and the release of arachidonic acid. Has no activity with galactosylceramide, lactosylceramide, sphingomyelin, phosphatidylcholine, phosphatidic acid and ceramide. C1P transfer is stimulated by phosphatidylserine in C1P source vesicles. Regulates autophagy and pyroptosis, but not apoptosis. The polypeptide is Ceramide-1-phosphate transfer protein (cptp) (Danio rerio (Zebrafish)).